A 249-amino-acid chain; its full sequence is Aspartate/glutamate leucyltransferase (249 aa).

It belongs to the R-transferase family. Bpt subfamily.

It localises to the cytoplasm. It catalyses the reaction N-terminal L-glutamyl-[protein] + L-leucyl-tRNA(Leu) = N-terminal L-leucyl-L-glutamyl-[protein] + tRNA(Leu) + H(+). It carries out the reaction N-terminal L-aspartyl-[protein] + L-leucyl-tRNA(Leu) = N-terminal L-leucyl-L-aspartyl-[protein] + tRNA(Leu) + H(+). Functions in the N-end rule pathway of protein degradation where it conjugates Leu from its aminoacyl-tRNA to the N-termini of proteins containing an N-terminal aspartate or glutamate. This chain is Aspartate/glutamate leucyltransferase, found in Azorhizobium caulinodans (strain ATCC 43989 / DSM 5975 / JCM 20966 / LMG 6465 / NBRC 14845 / NCIMB 13405 / ORS 571).